The primary structure comprises 428 residues: 3-deoxy-D-manno-octulosonic acid transferase (428 aa).

The Proton acceptor role is filled by glutamate 64. Residues 274–275, 316–318, and 342–345 contribute to the CMP site; these read PR, LGE, and NLIE.

This sequence belongs to the glycosyltransferase group 1 family. Glycosyltransferase 30 subfamily.

It is found in the cell inner membrane. It catalyses the reaction lipid IVA (E. coli) + CMP-3-deoxy-beta-D-manno-octulosonate = alpha-Kdo-(2-&gt;6)-lipid IVA (E. coli) + CMP + H(+). The protein operates within bacterial outer membrane biogenesis; LPS core biosynthesis. Functionally, involved in lipopolysaccharide (LPS) biosynthesis. Catalyzes the transfer of a single 3-deoxy-D-manno-octulosonate (Kdo) residue from CMP-Kdo to lipid IV(A), the tetraacyldisaccharide-1,4'-bisphosphate precursor of lipid A. In Bordetella pertussis, this protein is 3-deoxy-D-manno-octulosonic acid transferase (waaA).